Consider the following 139-residue polypeptide: Small ribosomal subunit protein bS6 (139 aa).

Over residues 114–133 the composition is skewed to basic and acidic residues; sequence KKEPREPRAPREPRVEKVDE. The interval 114 to 139 is disordered; sequence KKEPREPRAPREPRVEKVDEQTFTEE.

This sequence belongs to the bacterial ribosomal protein bS6 family.

Binds together with bS18 to 16S ribosomal RNA. In Campylobacter concisus (strain 13826), this protein is Small ribosomal subunit protein bS6.